Here is a 433-residue protein sequence, read N- to C-terminus: Enolase (433 aa).

Position 166 (Gln166) interacts with (2R)-2-phosphoglycerate. The Proton donor role is filled by Glu208. Mg(2+) contacts are provided by Asp245, Glu290, and Asp317. (2R)-2-phosphoglycerate-binding residues include Lys342, Arg371, Ser372, and Lys393. Lys342 acts as the Proton acceptor in catalysis.

The protein belongs to the enolase family. Mg(2+) serves as cofactor.

The protein resides in the cytoplasm. Its subcellular location is the secreted. The protein localises to the cell surface. It carries out the reaction (2R)-2-phosphoglycerate = phosphoenolpyruvate + H2O. Its pathway is carbohydrate degradation; glycolysis; pyruvate from D-glyceraldehyde 3-phosphate: step 4/5. Its function is as follows. Catalyzes the reversible conversion of 2-phosphoglycerate (2-PG) into phosphoenolpyruvate (PEP). It is essential for the degradation of carbohydrates via glycolysis. The chain is Enolase from Clostridium novyi (strain NT).